A 446-amino-acid chain; its full sequence is Protein adenylyltransferase FICD (446 aa).

The Cytoplasmic segment spans residues 1-18; sequence MAVTECEWASLGSRIGLR. A helical; Signal-anchor for type II membrane protein transmembrane segment spans residues 19–39; the sequence is AALVLLSGSLLVVLFPLSGLE. At 40-446 the chain is on the lumenal side; the sequence is HQYRTALNIL…ECKQTITIKT (407 aa). TPR repeat units follow at residues 94 to 127 and 128 to 161; these read AKAA…DPDH and VDAL…SPHN. Residues 218–223 carry the Inhibitory (S/T)XXXE(G/N) motif motif; sequence TVAIEG. E222 contributes to the ATP binding site. The N-linked (GlcNAc...) asparagine glycan is linked to N263. The region spanning 273-408 is the Fido domain; that stretch reads VTIDNILEIH…VRPFIRFIAK (136 aa). Residue 304-307 coordinates ATP; sequence VGHH. H351 is an active-site residue. Residues 355 to 362, 387 to 388, and N395 each bind ATP; these read DGNGRTSR and YY.

It belongs to the fic family. As to quaternary structure, homodimer. It depends on Mg(2+) as a cofactor. Mn(2+) is required as a cofactor.

Its subcellular location is the endoplasmic reticulum membrane. It carries out the reaction L-tyrosyl-[protein] + ATP = O-(5'-adenylyl)-L-tyrosyl-[protein] + diphosphate. The enzyme catalyses 3-O-(5'-adenylyl)-L-threonyl-[protein] + H2O = L-threonyl-[protein] + AMP + H(+). It catalyses the reaction L-threonyl-[protein] + ATP = 3-O-(5'-adenylyl)-L-threonyl-[protein] + diphosphate. With respect to regulation, the side chain of Glu-222 determines which of the two opposing activities (AMPylase or de-AMPylase) will take place. In response to endoplasmic reticulum stress, mediates de-AMPylase activity. Adenylyltransferase activity is inhibited by the inhibitory helix present at the N-terminus: Glu-222 binds ATP and competes with ATP-binding at Arg-362, thereby preventing adenylyltransferase activity. In unstressed cells, disengagement of Glu-222 promotes adenylyltransferase activity. Activation dissociates ATP-binding from Glu-222, allowing ordered binding of the entire ATP moiety with the alpha-phosphate in an orientation that is productive for accepting an incoming target hydroxyl side chain. Functionally, protein that can both mediate the addition of adenosine 5'-monophosphate (AMP) to specific residues of target proteins (AMPylation), and the removal of the same modification from target proteins (de-AMPylation), depending on the context. The side chain of Glu-222 determines which of the two opposing activities (AMPylase or de-AMPylase) will take place. Acts as a key regulator of the ERN1/IRE1-mediated unfolded protein response (UPR) by mediating AMPylation or de-AMPylation of HSPA5/BiP. In unstressed cells, acts as an adenylyltransferase by mediating AMPylation of HSPA5/BiP at 'Thr-518', thereby inactivating it. In response to endoplasmic reticulum stress, acts as a phosphodiesterase by mediating removal of ATP (de-AMPylation) from HSPA5/BiP at 'Thr-518', leading to restore HSPA5/BiP activity. The chain is Protein adenylyltransferase FICD from Xenopus tropicalis (Western clawed frog).